The chain runs to 427 residues: MSVEHATPVQQPAHAAASVRPVMILAGGTGGHIFPGLAVAKVLRARGVPVTWLGADGAMETRLVPQHAIQIDTLAISGLRGKGIVKLLGAPVRVMRAVRAAGFVLRKRQPRAVISFGGFAAGPGGLAARLLGVPLLVHEQNRAPGMTNKVLSRFARRVLTGFPGSFAGEEAVGNPVREEIAALPAPATRLVGRGGPVRLLVLGGSQGARALNNAVPAALAALGHPAVDVRHQCGEKLRAEAEAAYAQAAVNASVEPFIADMAAAYAWADLVVCRAGASTLAEVCAAGVGSVLVPFAAAVDDHQTRNAEYLVSAEAAVLLKQDDTLAVRLQQVLQTLLADPARRLAMAQAARTLAKPDAAERIADIILQEAGNGKSGMGNGQSAEQLQEHTVIHQNKRTDQALDAASASLHPIPDSRFPIRTSAGGAQ.

Residues 29–31 (TGG), N141, R177, S205, I258, and Q303 each bind UDP-N-acetyl-alpha-D-glucosamine. The segment at 408–427 (SLHPIPDSRFPIRTSAGGAQ) is disordered.

This sequence belongs to the glycosyltransferase 28 family. MurG subfamily.

The protein localises to the cell inner membrane. It catalyses the reaction di-trans,octa-cis-undecaprenyl diphospho-N-acetyl-alpha-D-muramoyl-L-alanyl-D-glutamyl-meso-2,6-diaminopimeloyl-D-alanyl-D-alanine + UDP-N-acetyl-alpha-D-glucosamine = di-trans,octa-cis-undecaprenyl diphospho-[N-acetyl-alpha-D-glucosaminyl-(1-&gt;4)]-N-acetyl-alpha-D-muramoyl-L-alanyl-D-glutamyl-meso-2,6-diaminopimeloyl-D-alanyl-D-alanine + UDP + H(+). The protein operates within cell wall biogenesis; peptidoglycan biosynthesis. Its function is as follows. Cell wall formation. Catalyzes the transfer of a GlcNAc subunit on undecaprenyl-pyrophosphoryl-MurNAc-pentapeptide (lipid intermediate I) to form undecaprenyl-pyrophosphoryl-MurNAc-(pentapeptide)GlcNAc (lipid intermediate II). The protein is UDP-N-acetylglucosamine--N-acetylmuramyl-(pentapeptide) pyrophosphoryl-undecaprenol N-acetylglucosamine transferase of Xanthomonas campestris pv. campestris (strain 8004).